A 174-amino-acid polypeptide reads, in one-letter code: Small ribosomal subunit protein uS5c (174 aa).

The S5 DRBM domain maps to 17-80 (WEERVVQVKR…TDAKKHLVTV (64 aa)).

It belongs to the universal ribosomal protein uS5 family. As to quaternary structure, part of the 30S ribosomal subunit. Contacts protein S4.

It is found in the plastid. The protein localises to the chloroplast. In terms of biological role, with S4 and S12 plays an important role in translational accuracy. The polypeptide is Small ribosomal subunit protein uS5c (rps5) (Pyropia yezoensis (Susabi-nori)).